We begin with the raw amino-acid sequence, 94 residues long: Acylphosphatase (94 aa).

The 88-residue stretch at 7 to 94 folds into the Acylphosphatase-like domain; sequence AVQARVYGRV…TAPGDFRIVA (88 aa). Residues Arg22 and Asn40 contribute to the active site.

Belongs to the acylphosphatase family.

It carries out the reaction an acyl phosphate + H2O = a carboxylate + phosphate + H(+). The polypeptide is Acylphosphatase (acyP) (Mesorhizobium japonicum (strain LMG 29417 / CECT 9101 / MAFF 303099) (Mesorhizobium loti (strain MAFF 303099))).